We begin with the raw amino-acid sequence, 329 residues long: Isopenicillin N synthase (329 aa).

4 residues coordinate isopenicillin N: Arg87, Tyr91, Ser183, and Tyr189. 6 residues coordinate N-[(5S)-5-amino-5-carboxypentanoyl]-L-cysteinyl-D-valine: Arg87, Tyr91, Ser183, Tyr189, His212, and Asp214. The Fe2OG dioxygenase domain occupies 180–286 (SLSSVSLIRY…RLSLPFFLNG (107 aa)). Fe(2+) is bound by residues His212, Asp214, and His268. Residue Arg277 participates in 2-oxoglutarate binding. An isopenicillin N-binding site is contributed by Ser279. Ser279 lines the N-[(5S)-5-amino-5-carboxypentanoyl]-L-cysteinyl-D-valine pocket.

Belongs to the iron/ascorbate-dependent oxidoreductase family. Fe cation serves as cofactor. Requires L-ascorbate as cofactor.

It catalyses the reaction N-[(5S)-5-amino-5-carboxypentanoyl]-L-cysteinyl-D-valine + O2 = isopenicillin N + 2 H2O. It participates in antibiotic biosynthesis; penicillin G biosynthesis; penicillin G from L-alpha-aminoadipate and L-cysteine and L-valine: step 2/3. Removes, in the presence of oxygen, 4 hydrogen atoms from delta-L-(alpha-aminoadipyl)-L-cysteinyl-D-valine (ACV) to form the azetidinone and thiazolidine rings of isopenicillin. The sequence is that of Isopenicillin N synthase (pcbC) from Streptomyces clavuligerus.